We begin with the raw amino-acid sequence, 292 residues long: 4-hydroxy-tetrahydrodipicolinate synthase (292 aa).

Residue Thr45 participates in pyruvate binding. Tyr133 (proton donor/acceptor) is an active-site residue. Residue Lys161 is the Schiff-base intermediate with substrate of the active site. Position 203 (Ile203) interacts with pyruvate.

The protein belongs to the DapA family. As to quaternary structure, homotetramer; dimer of dimers.

It is found in the cytoplasm. It catalyses the reaction L-aspartate 4-semialdehyde + pyruvate = (2S,4S)-4-hydroxy-2,3,4,5-tetrahydrodipicolinate + H2O + H(+). It participates in amino-acid biosynthesis; L-lysine biosynthesis via DAP pathway; (S)-tetrahydrodipicolinate from L-aspartate: step 3/4. Its function is as follows. Catalyzes the condensation of (S)-aspartate-beta-semialdehyde [(S)-ASA] and pyruvate to 4-hydroxy-tetrahydrodipicolinate (HTPA). This chain is 4-hydroxy-tetrahydrodipicolinate synthase, found in Vibrio cholerae serotype O1 (strain M66-2).